The chain runs to 398 residues: LL-diaminopimelate aminotransferase (398 aa).

Substrate contacts are provided by Tyr-14 and Gly-41. Pyridoxal 5'-phosphate-binding positions include Tyr-71, 104–105 (AK), Tyr-128, Asn-174, Tyr-205, and 233–235 (SFS). 3 residues coordinate substrate: Lys-105, Tyr-128, and Asn-174. N6-(pyridoxal phosphate)lysine is present on Lys-236. Pyridoxal 5'-phosphate contacts are provided by Arg-244 and Asn-275. The substrate site is built by Asn-275 and Arg-368.

It belongs to the class-I pyridoxal-phosphate-dependent aminotransferase family. LL-diaminopimelate aminotransferase subfamily. In terms of assembly, homodimer. Pyridoxal 5'-phosphate is required as a cofactor.

The catalysed reaction is (2S,6S)-2,6-diaminopimelate + 2-oxoglutarate = (S)-2,3,4,5-tetrahydrodipicolinate + L-glutamate + H2O + H(+). It functions in the pathway amino-acid biosynthesis; L-lysine biosynthesis via DAP pathway; LL-2,6-diaminopimelate from (S)-tetrahydrodipicolinate (aminotransferase route): step 1/1. Functionally, involved in the synthesis of meso-diaminopimelate (m-DAP or DL-DAP), required for both lysine and peptidoglycan biosynthesis. Catalyzes the direct conversion of tetrahydrodipicolinate to LL-diaminopimelate. This chain is LL-diaminopimelate aminotransferase, found in Chlamydia felis (strain Fe/C-56) (Chlamydophila felis).